Here is a 389-residue protein sequence, read N- to C-terminus: Probable serine/threonine-protein kinase PBL11 (389 aa).

Residue G2 is the site of N-myristoyl glycine attachment. The S-palmitoyl cysteine moiety is linked to residue C4. The region spanning 68–353 (FRPDSVVGEG…NEIVKTMEEL (286 aa)) is the Protein kinase domain. ATP contacts are provided by residues 74–82 (VGEGGFGCV) and K106. Y151 carries the phosphotyrosine modification. D203 functions as the Proton acceptor in the catalytic mechanism. S207 and S237 each carry phosphoserine. 2 positions are modified to phosphothreonine: T238 and T243. Residue Y251 is modified to Phosphotyrosine.

This sequence belongs to the protein kinase superfamily. Ser/Thr protein kinase family. In terms of tissue distribution, roots, leaves and stems.

The protein localises to the cell membrane. It carries out the reaction L-seryl-[protein] + ATP = O-phospho-L-seryl-[protein] + ADP + H(+). It catalyses the reaction L-threonyl-[protein] + ATP = O-phospho-L-threonyl-[protein] + ADP + H(+). Functionally, may play a role in the regulation of plant growth and development. May be involved in plant defense signaling. The polypeptide is Probable serine/threonine-protein kinase PBL11 (Arabidopsis thaliana (Mouse-ear cress)).